Reading from the N-terminus, the 428-residue chain is Histidine--tRNA ligase (428 aa).

Belongs to the class-II aminoacyl-tRNA synthetase family. Homodimer.

The protein resides in the cytoplasm. The enzyme catalyses tRNA(His) + L-histidine + ATP = L-histidyl-tRNA(His) + AMP + diphosphate + H(+). This chain is Histidine--tRNA ligase, found in Lactobacillus johnsonii (strain CNCM I-12250 / La1 / NCC 533).